Reading from the N-terminus, the 151-residue chain is Protein NrdI (151 aa).

It belongs to the NrdI family.

In terms of biological role, probably involved in ribonucleotide reductase function. This Mesoplasma florum (strain ATCC 33453 / NBRC 100688 / NCTC 11704 / L1) (Acholeplasma florum) protein is Protein NrdI.